An 83-amino-acid chain; its full sequence is Small ribosomal subunit protein uS17 (83 aa).

The protein belongs to the universal ribosomal protein uS17 family. Part of the 30S ribosomal subunit.

Its function is as follows. One of the primary rRNA binding proteins, it binds specifically to the 5'-end of 16S ribosomal RNA. The polypeptide is Small ribosomal subunit protein uS17 (Ehrlichia canis (strain Jake)).